We begin with the raw amino-acid sequence, 415 residues long: Serine hydroxymethyltransferase (415 aa).

(6S)-5,6,7,8-tetrahydrofolate-binding positions include L117 and 121 to 123 (GHL). K226 is subject to N6-(pyridoxal phosphate)lysine. (6S)-5,6,7,8-tetrahydrofolate contacts are provided by residues E241 and 349-351 (SPF).

The protein belongs to the SHMT family. In terms of assembly, homodimer. Requires pyridoxal 5'-phosphate as cofactor.

The protein localises to the cytoplasm. It catalyses the reaction (6R)-5,10-methylene-5,6,7,8-tetrahydrofolate + glycine + H2O = (6S)-5,6,7,8-tetrahydrofolate + L-serine. It participates in one-carbon metabolism; tetrahydrofolate interconversion. It functions in the pathway amino-acid biosynthesis; glycine biosynthesis; glycine from L-serine: step 1/1. Catalyzes the reversible interconversion of serine and glycine with tetrahydrofolate (THF) serving as the one-carbon carrier. This reaction serves as the major source of one-carbon groups required for the biosynthesis of purines, thymidylate, methionine, and other important biomolecules. Also exhibits THF-independent aldolase activity toward beta-hydroxyamino acids, producing glycine and aldehydes, via a retro-aldol mechanism. The polypeptide is Serine hydroxymethyltransferase (Trichlorobacter lovleyi (strain ATCC BAA-1151 / DSM 17278 / SZ) (Geobacter lovleyi)).